A 414-amino-acid polypeptide reads, in one-letter code: Sex comb on midleg-like protein 4 (414 aa).

Phosphoserine occurs at positions 55 and 65. The span at 257 to 276 shows a compositional bias: polar residues; that stretch reads HRGSLHPSSSLYCKRQNSGD. The tract at residues 257 to 343 is disordered; it reads HRGSLHPSSS…DARRPRSRNP (87 aa). Residues 284-304 show a composition bias toward low complexity; sequence AATAGGPRTSPMSSGGPSAPG. Residues 288-354 form the SAM domain; that stretch reads GGPRTSPMSS…AWTVEDVVWF (67 aa). Over residues 312–332 the composition is skewed to polar residues; that stretch reads PKRNTTSLEGNRCASSPSQDA.

The protein belongs to the SCM family.

It is found in the nucleus. Functionally, putative Polycomb group (PcG) protein. PcG proteins act by forming multiprotein complexes, which are required to maintain the transcriptionally repressive state of homeotic genes throughout development. This chain is Sex comb on midleg-like protein 4 (SCML4), found in Homo sapiens (Human).